The sequence spans 1376 residues: DNA-directed RNA polymerase subunit beta'' (1376 aa).

Zn(2+)-binding residues include Cys221, Cys290, Cys297, and Cys300. Residues 895 to 919 are disordered; that stretch reads PSGSGFPSDNELDHSNRNPFSSSYP.

This sequence belongs to the RNA polymerase beta' chain family. RpoC2 subfamily. In plastids the minimal PEP RNA polymerase catalytic core is composed of four subunits: alpha, beta, beta', and beta''. When a (nuclear-encoded) sigma factor is associated with the core the holoenzyme is formed, which can initiate transcription. Zn(2+) serves as cofactor.

It is found in the plastid. The protein resides in the chloroplast. It carries out the reaction RNA(n) + a ribonucleoside 5'-triphosphate = RNA(n+1) + diphosphate. Its function is as follows. DNA-dependent RNA polymerase catalyzes the transcription of DNA into RNA using the four ribonucleoside triphosphates as substrates. The sequence is that of DNA-directed RNA polymerase subunit beta'' from Pelargonium hortorum (Common geranium).